A 294-amino-acid chain; its full sequence is tRNA pseudouridine synthase B (294 aa).

The active-site Nucleophile is D38.

Belongs to the pseudouridine synthase TruB family. Type 1 subfamily.

The enzyme catalyses uridine(55) in tRNA = pseudouridine(55) in tRNA. Responsible for synthesis of pseudouridine from uracil-55 in the psi GC loop of transfer RNAs. In Clostridium perfringens (strain SM101 / Type A), this protein is tRNA pseudouridine synthase B.